A 248-amino-acid polypeptide reads, in one-letter code: Triosephosphate isomerase (248 aa).

9-11 is a substrate binding site; it reads NWK. The active-site Electrophile is His-94. The active-site Proton acceptor is Glu-166. Substrate contacts are provided by residues Gly-172, Ser-212, and 233–234; that span reads GG.

Belongs to the triosephosphate isomerase family. As to quaternary structure, homodimer.

It is found in the cytoplasm. It carries out the reaction D-glyceraldehyde 3-phosphate = dihydroxyacetone phosphate. The protein operates within carbohydrate biosynthesis; gluconeogenesis. Its pathway is carbohydrate degradation; glycolysis; D-glyceraldehyde 3-phosphate from glycerone phosphate: step 1/1. Functionally, involved in the gluconeogenesis. Catalyzes stereospecifically the conversion of dihydroxyacetone phosphate (DHAP) to D-glyceraldehyde-3-phosphate (G3P). The chain is Triosephosphate isomerase from Clostridium beijerinckii (strain ATCC 51743 / NCIMB 8052) (Clostridium acetobutylicum).